A 444-amino-acid polypeptide reads, in one-letter code: Methylenetetrahydrofolate--tRNA-(uracil-5-)-methyltransferase TrmFO (444 aa).

Position 9-14 (9-14 (GAGMAG)) interacts with FAD.

The protein belongs to the MnmG family. TrmFO subfamily. FAD serves as cofactor.

The protein resides in the cytoplasm. It catalyses the reaction uridine(54) in tRNA + (6R)-5,10-methylene-5,6,7,8-tetrahydrofolate + NADH + H(+) = 5-methyluridine(54) in tRNA + (6S)-5,6,7,8-tetrahydrofolate + NAD(+). The catalysed reaction is uridine(54) in tRNA + (6R)-5,10-methylene-5,6,7,8-tetrahydrofolate + NADPH + H(+) = 5-methyluridine(54) in tRNA + (6S)-5,6,7,8-tetrahydrofolate + NADP(+). Functionally, catalyzes the folate-dependent formation of 5-methyl-uridine at position 54 (M-5-U54) in all tRNAs. The chain is Methylenetetrahydrofolate--tRNA-(uracil-5-)-methyltransferase TrmFO from Cereibacter sphaeroides (strain KD131 / KCTC 12085) (Rhodobacter sphaeroides).